A 256-amino-acid chain; its full sequence is MNNIWWQTKGQGNVHLVLLHGWGLNAEVWRCIDEELSSHFTLHLVDLPGFGRSRGFGALSLAEMAEAVLRQAPDKAIWLGWSLGGLVASQIALTHPERVQALVTVASSPCFSARDEWPGIKPDVLAGFQQQLSDDFQRTVERFLALQTMGTETARQDARALKKTVLALPMPEVDVLNGGLEILKTVDLRLPLQNVPMPFLRLYGYLDGLVPRKVVPMLDKLWPHSESYIFAKAAHAPFISHPVEFRHVLVALKQRV.

The AB hydrolase-1 domain occupies 15–242; the sequence is HLVLLHGWGL…AAHAPFISHP (228 aa). Substrate contacts are provided by residues W22, 82–83, and 143–147; these read SL and FLALQ. S82 functions as the Nucleophile in the catalytic mechanism. Residues D207 and H235 contribute to the active site. Residue H235 coordinates substrate.

Belongs to the AB hydrolase superfamily. Carboxylesterase BioH family. Monomer.

The protein localises to the cytoplasm. The catalysed reaction is 6-carboxyhexanoyl-[ACP] methyl ester + H2O = 6-carboxyhexanoyl-[ACP] + methanol + H(+). It functions in the pathway cofactor biosynthesis; biotin biosynthesis. Functionally, the physiological role of BioH is to remove the methyl group introduced by BioC when the pimeloyl moiety is complete. It allows to synthesize pimeloyl-ACP via the fatty acid synthetic pathway through the hydrolysis of the ester bonds of pimeloyl-ACP esters. This is Pimeloyl-[acyl-carrier protein] methyl ester esterase from Escherichia coli O157:H7.